Here is a 205-residue protein sequence, read N- to C-terminus: LexA repressor (205 aa).

The segment at residues 28 to 48 (IRDIMKHFNFKSPRAAHKHLI) is a DNA-binding region (H-T-H motif). Catalysis depends on for autocatalytic cleavage activity residues serine 125 and lysine 163.

It belongs to the peptidase S24 family. In terms of assembly, homodimer.

The catalysed reaction is Hydrolysis of Ala-|-Gly bond in repressor LexA.. Its function is as follows. Represses a number of genes involved in the response to DNA damage (SOS response), including recA and lexA. In the presence of single-stranded DNA, RecA interacts with LexA causing an autocatalytic cleavage which disrupts the DNA-binding part of LexA, leading to derepression of the SOS regulon and eventually DNA repair. This chain is LexA repressor, found in Petrotoga mobilis (strain DSM 10674 / SJ95).